The sequence spans 381 residues: Alkanesulfonate monooxygenase (381 aa).

This sequence belongs to the SsuD family. As to quaternary structure, homotetramer.

It catalyses the reaction an alkanesulfonate + FMNH2 + O2 = an aldehyde + FMN + sulfite + H2O + 2 H(+). In terms of biological role, catalyzes the desulfonation of aliphatic sulfonates. In Escherichia coli (strain SMS-3-5 / SECEC), this protein is Alkanesulfonate monooxygenase.